A 526-amino-acid polypeptide reads, in one-letter code: Thymocyte selection-associated high mobility group box protein TOX (526 aa).

Over residues 194 to 203 (NMGGTNVAHN) the composition is skewed to polar residues. The segment at 194 to 264 (NMGGTNVAHN…KKDPNEPQKP (71 aa)) is disordered. Residues 209–220 (GSKSATPSPSSS) are compositionally biased toward low complexity. Residues 228 to 245 (DASKINGGEKRPASDMGK) are compositionally biased toward basic and acidic residues. The Nuclear localization signal motif lies at 237–256 (KRPASDMGKKPKTPKKKKKK). Residues 246 to 256 (KPKTPKKKKKK) are compositionally biased toward basic residues. The HMG box DNA-binding region spans 261–329 (PQKPVSAYAL…EYLKQLAAYR (69 aa)).

The protein belongs to the high motility group (HMG) box superfamily. Interacts with HBO1 complex composed at least of KAT7/HBO1, ING4, MEAF6, and JADE2; this complex is involved in histone acetylation. Interacts with DNMT1, LEO1, PAF1, SAP130 and SIN3A; these interactors regulate chromatin remodeling. Interacts with an array of proteins involved in RNA processing and translation and DNA replication. In terms of tissue distribution, expressed in neurons of the subventricular zone (at protein level). Expressed in distinct subpopulations of thymocytes undergoing positive selection: double CD4-positive CD8-positive (DP) cells, CD4-positive CD8-low transitional cells and in single CD4-positive and CD8-positive cells (at protein level). Expressed in ILC progenitors and mature ILC subsets: ILC1, ILC2 and ILC3 (at protein level). Expressed in lymphoid tissue-inducer cells and bone marrow NK cell subsets. Abundant in thymus, liver and brain. Also detected in small intestine, spleen, stomach and testis. Highly expressed in tumor-infiltrating CD8-positive T cells (at protein level).

Its subcellular location is the nucleus. In terms of biological role, transcriptional regulator with a major role in neural stem cell commitment and corticogenesis as well as in lymphoid cell development and lymphoid tissue organogenesis. Binds to GC-rich DNA sequences in the proximity of transcription start sites and may alter chromatin structure, modifying access of transcription factors to DNA. During cortical development, controls the neural stem cell pool by inhibiting the switch from proliferative to differentiating progenitors. Beyond progenitor cells, promotes neurite outgrowth in newborn neurons migrating to reach the cortical plate. May activate or repress critical genes for neural stem cell fate such as SOX2, EOMES and ROBO2. Plays an essential role in the development of lymphoid tissue-inducer (LTi) cells, a subset necessary for the formation of secondary lymphoid organs: peripheral lymph nodes and Peyer's patches. Acts as a developmental checkpoint and regulates thymocyte positive selection toward T cell lineage commitment. Required for the development of various T cell subsets, including CD4-positive helper T cells, CD8-positive cytotoxic T cells, regulatory T cells and CD1D-dependent natural killer T (NKT) cells. Required for the differentiation of common lymphoid progenitors (CMP) to innate lymphoid cells (ILC). May regulate the NOTCH-mediated gene program, promoting differentiation of the ILC lineage. Required at the progenitor phase of NK cell development in the bone marrow to specify NK cell lineage commitment. Upon chronic antigen stimulation, diverts T cell development by promoting the generation of exhaustive T cells, while suppressing effector and memory T cell programming. May regulate the expression of genes encoding inhibitory receptors such as PDCD1 and induce the exhaustion program, to prevent the overstimulation of T cells and activation-induced cell death. The protein is Thymocyte selection-associated high mobility group box protein TOX of Mus musculus (Mouse).